A 59-amino-acid chain; its full sequence is Large ribosomal subunit protein uL30 (59 aa).

The protein belongs to the universal ribosomal protein uL30 family. Part of the 50S ribosomal subunit.

This Psychrobacter arcticus (strain DSM 17307 / VKM B-2377 / 273-4) protein is Large ribosomal subunit protein uL30.